Reading from the N-terminus, the 360-residue chain is MTATLERRESFSLWERFCSWITSTENRLYIGWFGVLMIPTLLTATSCYIIAFIAAPPVDIDGIREPVAGSLMYGNNIITGAVIPSSNAIGVHFYPIWEAASLDEWLYNGGPYQLIVLHFLLGVASYMGREWELSYRLGMRPWIFVAFSAPVAAASAVFLVYPIGQGSFSDGMPLGISGTFNFMLVFQAEHNILMHPFHMAGVAGVFGGSLFSAMHGSLVTSSLIRETSEIESANYGYKFGQEEETYNIVAAHGYFGRLIFQYASFNNSRALHFFLAAWPVVGIWLTALGVSTMAFNLNGFNFNQSVVDSQGRVINTWADIINRADLGMEVMHERNAHNFPLDLASNEVLPVAVNAPAVNG.

Helical transmembrane passes span 29 to 46, 118 to 133, and 142 to 156; these read YIGW…TATS, HFLL…EWEL, and WIFV…AASA. A chlorophyll a-binding site is contributed by H118. Residue Y126 coordinates pheophytin a. [CaMn4O5] cluster-binding residues include D170 and E189. A helical transmembrane segment spans residues 197–218; that stretch reads FHMAGVAGVFGGSLFSAMHGSL. Residue H198 participates in chlorophyll a binding. A quinone contacts are provided by residues H215 and 264-265; that span reads SF. Fe cation is bound at residue H215. A Fe cation-binding site is contributed by H272. Residues 274–288 form a helical membrane-spanning segment; that stretch reads FLAAWPVVGIWLTAL. The [CaMn4O5] cluster site is built by H332, E333, D342, and A344. Residues 345–360 constitute a propeptide that is removed on maturation; sequence SNEVLPVAVNAPAVNG.

It belongs to the reaction center PufL/M/PsbA/D family. PSII is composed of 1 copy each of membrane proteins PsbA, PsbB, PsbC, PsbD, PsbE, PsbF, PsbH, PsbI, PsbJ, PsbK, PsbL, PsbM, PsbT, PsbX, PsbY, PsbZ, Psb30/Ycf12, at least 3 peripheral proteins of the oxygen-evolving complex and a large number of cofactors. It forms dimeric complexes. Requires The D1/D2 heterodimer binds P680, chlorophylls that are the primary electron donor of PSII, and subsequent electron acceptors. It shares a non-heme iron and each subunit binds pheophytin, quinone, additional chlorophylls, carotenoids and lipids. D1 provides most of the ligands for the Mn4-Ca-O5 cluster of the oxygen-evolving complex (OEC). There is also a Cl(-1) ion associated with D1 and D2, which is required for oxygen evolution. The PSII complex binds additional chlorophylls, carotenoids and specific lipids. as cofactor. In terms of processing, tyr-161 forms a radical intermediate that is referred to as redox-active TyrZ, YZ or Y-Z. Post-translationally, C-terminally processed by CTPA; processing is essential to allow assembly of the oxygen-evolving complex and thus photosynthetic growth.

It localises to the plastid. The protein resides in the chloroplast thylakoid membrane. The catalysed reaction is 2 a plastoquinone + 4 hnu + 2 H2O = 2 a plastoquinol + O2. Its function is as follows. Photosystem II (PSII) is a light-driven water:plastoquinone oxidoreductase that uses light energy to abstract electrons from H(2)O, generating O(2) and a proton gradient subsequently used for ATP formation. It consists of a core antenna complex that captures photons, and an electron transfer chain that converts photonic excitation into a charge separation. The D1/D2 (PsbA/PsbD) reaction center heterodimer binds P680, the primary electron donor of PSII as well as several subsequent electron acceptors. The protein is Photosystem II protein D1 of Heterosigma akashiwo (Chromophytic alga).